The primary structure comprises 183 residues: Probable adenylyl-sulfate kinase (183 aa).

17-24 (GLPGSGKT) is a binding site for ATP. S91 acts as the Phosphoserine intermediate in catalysis.

This sequence belongs to the APS kinase family.

The enzyme catalyses adenosine 5'-phosphosulfate + ATP = 3'-phosphoadenylyl sulfate + ADP + H(+). It participates in sulfur metabolism; hydrogen sulfide biosynthesis; sulfite from sulfate: step 2/3. In terms of biological role, catalyzes the synthesis of activated sulfate. The protein is Probable adenylyl-sulfate kinase (cysC) of Aeropyrum pernix (strain ATCC 700893 / DSM 11879 / JCM 9820 / NBRC 100138 / K1).